We begin with the raw amino-acid sequence, 133 residues long: Small ribosomal subunit protein uS8 (133 aa).

The protein belongs to the universal ribosomal protein uS8 family. In terms of assembly, part of the 30S ribosomal subunit. Contacts proteins S5 and S12.

One of the primary rRNA binding proteins, it binds directly to 16S rRNA central domain where it helps coordinate assembly of the platform of the 30S subunit. The chain is Small ribosomal subunit protein uS8 from Thermosynechococcus vestitus (strain NIES-2133 / IAM M-273 / BP-1).